Consider the following 141-residue polypeptide: Large ribosomal subunit protein uL16 (141 aa).

Residues 1–17 are compositionally biased toward basic residues; sequence MLQPKRTKYRKVQKGKM. The segment at 1-29 is disordered; that stretch reads MLQPKRTKYRKVQKGKMKGNSQRGHELSN.

The protein belongs to the universal ribosomal protein uL16 family. As to quaternary structure, part of the 50S ribosomal subunit.

Binds 23S rRNA and is also seen to make contacts with the A and possibly P site tRNAs. The sequence is that of Large ribosomal subunit protein uL16 from Flavobacterium psychrophilum (strain ATCC 49511 / DSM 21280 / CIP 103535 / JIP02/86).